Here is a 478-residue protein sequence, read N- to C-terminus: MEKNLSSRDDDALHSLSAPSSSYNSIYDLLHYHERGNGLTINGKPSYSIEDAGDQITRDNVSWNGANVFGKSANLTFKFLQSARSTPDGDTGFVKFNAAQISQAKLALQSWADVANVTFTEVTGNQSANVTFGNYTRDSSGRLDYGTQAYAYLPGSGSASGTTWYNYNVDNIRSPDTMEYGRQTLTHEIGHALGLNHPGDYNAGEGNPSYSDVTYAEDTRQFSIMSYWSEKNTGGDFKGHYAAGPMLDDIAAIQRLYGANMTTRTGDSVYGFNSNTDRDFYTATSSSKALIFSAWDAGGNDTFDFSGYSNNQRINLNDGSLSDVGGLKGNVSIAEGVTIENAIGGSGNDLLIGNNADNTLRGGAGDDVLFGGSGADRLYGGSGRDTFVYTAASDSKVAAPDWLLDFQTGADKIDLSALNTGNNLHFVNQFSGSGGEIMLNWDASANTSNLYLNLDNNTSPEFLVKIVGQVSQTADFVV.

Positions 1 to 17 (MEKNLSSRDDDALHSLS) are excised as a propeptide. His187 is a Zn(2+) binding site. The active site involves Glu188. 2 residues coordinate Zn(2+): His191 and Tyr227. Ca(2+)-binding residues include Arg264, Gly266, Asp296, Gly298, Gly299, Asp301, Thr338, Glu340, Gly345, Gly347, Asp349, Asn354, Ala356, Asn358, Gly362, Gly363, Ala364, Gly365, Asp367, Gly371, Gly372, Gly374, Asp376, Gly380, Gly381, Gly383, Asp385, Asp394, Asp401, and Asp411. Hemolysin-type calcium-binding repeat units follow at residues 343–360 (IGGS…DNTL) and 361–378 (RGGA…ADRL).

Belongs to the peptidase M10B family. Requires Ca(2+) as cofactor. Zn(2+) is required as a cofactor.

Its subcellular location is the secreted. The catalysed reaction is Preferential cleavage of bonds with hydrophobic residues in P1'.. This chain is Serralysin C (prtC), found in Dickeya chrysanthemi (Pectobacterium chrysanthemi).